A 1034-amino-acid chain; its full sequence is Potassium-transporting ATPase alpha chain 1 (1034 aa).

Over 1-97 the chain is Cytoplasmic; it reads MGKAENYELY…NALRPPRGTP (97 aa). Residues Tyr7 and Tyr10 each carry the phosphotyrosine modification. The tract at residues 14–41 is disordered; the sequence is LGSGPGGDMTAKMSKKKAGGGGGKKKEK. Positions 26 to 39 are enriched in basic residues; that stretch reads MSKKKAGGGGGKKK. A Phosphoserine modification is found at Ser27. A helical transmembrane segment spans residues 98–118; it reads EYVKFARQLAGGLQCLMWVAA. At 119–141 the chain is on the lumenal side; the sequence is AICLIAFAIQASEGDLTTDDNLY. The chain crosses the membrane as a helical span at residues 142–162; that stretch reads LAVALIAVVVVTGCFGYYQEF. Topologically, residues 163–298 are cytoplasmic; it reads KSTNIIASFK…NEKTPIAIEI (136 aa). A helical transmembrane segment spans residues 299 to 318; the sequence is EHFVDIIAGLAILFGATFFV. Over 319-330 the chain is Lumenal; the sequence is VAMCIGYTFLRA. Residues 331-348 traverse the membrane as a helical segment; that stretch reads MVFFMAIVVAYVPEGLLA. K(+) contacts are provided by Val339, Ala340, Val342, and Glu344. Residues 349–782 lie on the Cytoplasmic side of the membrane; it reads TVTVCLSLTA…EQGRLIFDNL (434 aa). Asp386 functions as the 4-aspartylphosphate intermediate in the catalytic mechanism. Mg(2+) contacts are provided by Asp386 and Thr388. A phosphoserine mark is found at Ser462 and Ser600. 2 residues coordinate Mg(2+): Asp727 and Asp731. A helical transmembrane segment spans residues 783-802; that stretch reads KKSIAYTLTKNIPELTPYLI. Position 796 (Glu796) interacts with K(+). Topologically, residues 803-812 are lumenal; the sequence is YITVSVPLPL. A helical membrane pass occupies residues 813–833; sequence GCITILFIELCTDIFPSVSLA. Glu821 contributes to the K(+) binding site. The Cytoplasmic portion of the chain corresponds to 834–853; it reads YEKAESDIMHLRPRNPKRDR. Ser839 carries the post-translational modification Phosphoserine. Residues 854–876 form a helical membrane-spanning segment; that stretch reads LVNEPLAAYSYFQIGAIQSFAGF. The Lumenal segment spans residues 877-928; that stretch reads ADYFTAMAQEGWFPLLCVGLRPQWEDHHLQDLQDSYGQEWTFGQRLYQQYTC. A helical membrane pass occupies residues 929-948; it reads YTVFFISIEMCQIADVLIRK. The Cytoplasmic portion of the chain corresponds to 949–962; sequence TRRLSVFQQGFFRN. Ser953 bears the Phosphoserine; by PKA mark. A helical membrane pass occupies residues 963 to 981; that stretch reads KILVIAIVFQVCIGCFLCY. Residues 982 to 996 are Lumenal-facing; sequence CPGMPNIFNFMPIRF. Residues 997-1017 traverse the membrane as a helical segment; it reads QWWLVPMPFGLLIFVYDEIRK. Residues 1018 to 1034 lie on the Cytoplasmic side of the membrane; it reads LGVRCCPGSWWDQELYY.

The protein belongs to the cation transport ATPase (P-type) (TC 3.A.3) family. Type IIC subfamily. In terms of assembly, the gastric H(+)/K(+) ATPase pump is composed of the catalytic alpha subunit ATP4A and the regulatory beta subunit ATP4B. Interacts (via the P-domain) with ATP4B (via N-terminus); this interaction stabilizes the lumenal-open E2 conformation state and prevents the reverse reaction of the transport cycle. Expressed in parietal cells (at protein level).

It localises to the apical cell membrane. It carries out the reaction K(+)(out) + ATP + H2O + H(+)(in) = K(+)(in) + ADP + phosphate + 2 H(+)(out). Its function is as follows. The catalytic subunit of the gastric H(+)/K(+) ATPase pump which transports H(+) ions in exchange for K(+) ions across the apical membrane of parietal cells. Uses ATP as an energy source to pump H(+) ions to the gastric lumen while transporting K(+) ion from the lumen into the cell. Remarkably generates a million-fold proton gradient across the gastric parietal cell membrane, acidifying the gastric juice down to pH 1. Within a transport cycle, the transfer of a H(+) ion across the membrane is coupled to ATP hydrolysis and is associated with a transient phosphorylation that shifts the pump conformation from inward-facing (E1) to outward-facing state (E2). The release of the H(+) ion in the stomach lumen is followed by binding of K(+) ion converting the pump conformation back to the E1 state. The protein is Potassium-transporting ATPase alpha chain 1 of Mus musculus (Mouse).